Consider the following 744-residue polypeptide: Eukaryotic translation initiation factor 3 subunit B (744 aa).

The tract at residues 1-20 is disordered; it reads MAPSFDHLPDPEEDEYDEEE. Residues 11 to 20 show a composition bias toward acidic residues; that stretch reads PEEDEYDEEE. Residues 40 to 126 enclose the RRM domain; it reads TFVVIDGLPE…HTLRVNKLTD (87 aa). WD repeat units lie at residues 193 to 232, 234 to 290, 307 to 348, and 577 to 622; these read DRQHWTESFVQWSPQGTFLTSMHQQGVQLWGGPSWTRQKR, AHPF…PLRS, PVKR…LLDK, and ADHY…LREE. Positions 699–714 are enriched in basic and acidic residues; sequence EREDAGLPRDPLEPLK. The segment at 699–722 is disordered; sequence EREDAGLPRDPLEPLKSKMASGDE.

The protein belongs to the eIF-3 subunit B family. Component of the eukaryotic translation initiation factor 3 (eIF-3) complex.

Its subcellular location is the cytoplasm. In terms of biological role, RNA-binding component of the eukaryotic translation initiation factor 3 (eIF-3) complex, which is involved in protein synthesis of a specialized repertoire of mRNAs and, together with other initiation factors, stimulates binding of mRNA and methionyl-tRNAi to the 40S ribosome. The eIF-3 complex specifically targets and initiates translation of a subset of mRNAs involved in cell proliferation. The chain is Eukaryotic translation initiation factor 3 subunit B (prt1) from Sclerotinia sclerotiorum (strain ATCC 18683 / 1980 / Ss-1) (White mold).